A 501-amino-acid polypeptide reads, in one-letter code: L-arabinose isomerase (501 aa).

Mn(2+) is bound by residues E306, E333, H350, and H450.

It belongs to the arabinose isomerase family. As to quaternary structure, homohexamer. The cofactor is Mn(2+).

It catalyses the reaction beta-L-arabinopyranose = L-ribulose. It functions in the pathway carbohydrate degradation; L-arabinose degradation via L-ribulose; D-xylulose 5-phosphate from L-arabinose (bacterial route): step 1/3. Its function is as follows. Catalyzes the conversion of L-arabinose to L-ribulose. The protein is L-arabinose isomerase of Pectobacterium atrosepticum (strain SCRI 1043 / ATCC BAA-672) (Erwinia carotovora subsp. atroseptica).